Consider the following 198-residue polypeptide: Putative mycofactocin biosynthesis transcriptional regulator MftR (198 aa).

The HTH tetR-type domain occupies 12-72 (STTPHHISDV…GDFSTHLAQL (61 aa)). Residues 35–54 (SVDDIARAAGIARRTLFRYY) constitute a DNA-binding region (H-T-H motif).

Functionally, may regulate a gene cluster involved in mycofactocin expression. Mycofactocin is a conserved polypeptide that might serve as an electron carrier. The polypeptide is Putative mycofactocin biosynthesis transcriptional regulator MftR (mftR) (Mycobacterium tuberculosis (strain ATCC 25618 / H37Rv)).